Consider the following 125-residue polypeptide: Fluoride-specific ion channel FluC (125 aa).

The next 4 membrane-spanning stretches (helical) occupy residues 1-21 (MIQALLVAVGGAIGSVLRYFV), 32-52 (AFPWGTLAVNVVGCFVIGVFA), 68-88 (LLITGFLGGFTTFSAFSLDAI), and 101-121 (IYIAASVGLSMAAVFAGLAIM). Na(+) is bound by residues glycine 75 and threonine 78.

It belongs to the fluoride channel Fluc/FEX (TC 1.A.43) family.

It localises to the cell inner membrane. It catalyses the reaction fluoride(in) = fluoride(out). Na(+) is not transported, but it plays an essential structural role and its presence is essential for fluoride channel function. Fluoride-specific ion channel. Important for reducing fluoride concentration in the cell, thus reducing its toxicity. The chain is Fluoride-specific ion channel FluC from Rhizobium etli (strain ATCC 51251 / DSM 11541 / JCM 21823 / NBRC 15573 / CFN 42).